A 488-amino-acid chain; its full sequence is Protein nucleotidyltransferase YdiU (488 aa).

ATP is bound by residues G91, G93, R94, K114, D126, G127, R177, and R184. D253 (proton acceptor) is an active-site residue. Mg(2+) is bound by residues N254 and D263. ATP is bound at residue D263.

It belongs to the SELO family. Requires Mg(2+) as cofactor. Mn(2+) serves as cofactor.

It catalyses the reaction L-seryl-[protein] + ATP = 3-O-(5'-adenylyl)-L-seryl-[protein] + diphosphate. The enzyme catalyses L-threonyl-[protein] + ATP = 3-O-(5'-adenylyl)-L-threonyl-[protein] + diphosphate. The catalysed reaction is L-tyrosyl-[protein] + ATP = O-(5'-adenylyl)-L-tyrosyl-[protein] + diphosphate. It carries out the reaction L-histidyl-[protein] + UTP = N(tele)-(5'-uridylyl)-L-histidyl-[protein] + diphosphate. It catalyses the reaction L-seryl-[protein] + UTP = O-(5'-uridylyl)-L-seryl-[protein] + diphosphate. The enzyme catalyses L-tyrosyl-[protein] + UTP = O-(5'-uridylyl)-L-tyrosyl-[protein] + diphosphate. Nucleotidyltransferase involved in the post-translational modification of proteins. It can catalyze the addition of adenosine monophosphate (AMP) or uridine monophosphate (UMP) to a protein, resulting in modifications known as AMPylation and UMPylation. In Bacillus cereus (strain G9842), this protein is Protein nucleotidyltransferase YdiU.